Consider the following 299-residue polypeptide: Sugar transporter SWEET1 (299 aa).

A MtN3/slv 1 domain is found at 7–91 (QVLSISAITT…CVFFLIYSLP (85 aa)). The next 7 membrane-spanning stretches (helical) occupy residues 8-28 (VLSISAITTTIALFFCGIPIC), 36-56 (AVGDISGVPFLMGVLGGSFWL), 67-87 (MIIVNVVGVACMAFYCVFFLI), 95-115 (FTCQLILVTSTIGGMVLWIAL), 124-144 (VICMTFNIMNFGAPLAGLGVV), 155-175 (LPMCVANFLVSSQWCLYGNLV), and 180-200 (IIIPNGIGMFLAIVQLALFVV). The region spanning 121 to 205 (YLGVICMTFN…ALFVVLPIRE (85 aa)) is the MtN3/slv 2 domain. The tract at residues 230–299 (RGDCIVSSPP…DPDLSSIQSP (70 aa)) is disordered. The span at 247–261 (NETRSDVEDKFDKLM) shows a compositional bias: basic and acidic residues. Over residues 276–299 (SMGSPPSYKSRSSSDPDLSSIQSP) the composition is skewed to low complexity.

Belongs to the SWEET sugar transporter family.

It is found in the golgi apparatus membrane. The protein resides in the cell membrane. In terms of biological role, mediates both low-affinity uptake and efflux of sugar across the membrane. The protein is Sugar transporter SWEET1 (swt-1) of Caenorhabditis elegans.